The primary structure comprises 289 residues: MLKNLFRKTKYITVSQKNIGNYKRENTPTIPDGMWVKCNKCGEILYQNDLEKNYMVCNLCGNHFRIGVKERIKYLFDKDTFKEWDYKIKTENPLDFKGYDEKIEHIKEKTNLSEAVTTGKGKIAGMEVVVCIMDSKFMMGSMGSVVGEKITRAIERAIELRLPVIIFTASGGARMQEGILSLMQMAKVSSALAKLDEEGLLYICVLTDPTTGGVTASFAMLGDIILAEPDALIGFAGKRVIEQTINEKLPEDFQKSEFLLEHGFIDKIVPRSDLRKVLAKLINMHQNSF.

The region spanning 34–289 (MWVKCNKCGE…KLINMHQNSF (256 aa)) is the CoA carboxyltransferase N-terminal domain. Positions 38, 41, 57, and 60 each coordinate Zn(2+). The C4-type zinc finger occupies 38-60 (CNKCGEILYQNDLEKNYMVCNLC).

It belongs to the AccD/PCCB family. As to quaternary structure, acetyl-CoA carboxylase is a heterohexamer composed of biotin carboxyl carrier protein (AccB), biotin carboxylase (AccC) and two subunits each of ACCase subunit alpha (AccA) and ACCase subunit beta (AccD). The cofactor is Zn(2+).

Its subcellular location is the cytoplasm. It catalyses the reaction N(6)-carboxybiotinyl-L-lysyl-[protein] + acetyl-CoA = N(6)-biotinyl-L-lysyl-[protein] + malonyl-CoA. It functions in the pathway lipid metabolism; malonyl-CoA biosynthesis; malonyl-CoA from acetyl-CoA: step 1/1. In terms of biological role, component of the acetyl coenzyme A carboxylase (ACC) complex. Biotin carboxylase (BC) catalyzes the carboxylation of biotin on its carrier protein (BCCP) and then the CO(2) group is transferred by the transcarboxylase to acetyl-CoA to form malonyl-CoA. The chain is Acetyl-coenzyme A carboxylase carboxyl transferase subunit beta from Clostridium botulinum (strain Kyoto / Type A2).